The chain runs to 58 residues: Small ribosomal subunit protein eS31 (58 aa).

Zn(2+) is bound by residues C29, C32, C48, and C51. The C4-type zinc-finger motif lies at 29–51 (CPRCGSFMAHHLKPVPRWHCGKC).

This sequence belongs to the eukaryotic ribosomal protein eS31 family. As to quaternary structure, part of the 30S ribosomal subunit. Requires Zn(2+) as cofactor.

The polypeptide is Small ribosomal subunit protein eS31 (Ignicoccus hospitalis (strain KIN4/I / DSM 18386 / JCM 14125)).